The primary structure comprises 260 residues: Ribonuclease 3 (260 aa).

The RNase III domain maps to 16-145 (VQLLESRLGL…VFGAVFLTSG (130 aa)). Position 58 (glutamate 58) interacts with Mg(2+). Aspartate 62 is a catalytic residue. Residues aspartate 131 and glutamate 134 each contribute to the Mg(2+) site. Glutamate 134 is an active-site residue. The region spanning 172–241 (DYKTLLQEMA…AQATLEKLRE (70 aa)) is the DRBM domain. A disordered region spans residues 219-260 (ATGRSKKEAEQSAAQATLEKLREDAACPTSPPPGTPRHDTPA).

The protein belongs to the ribonuclease III family. In terms of assembly, homodimer. Mg(2+) serves as cofactor.

Its subcellular location is the cytoplasm. It carries out the reaction Endonucleolytic cleavage to 5'-phosphomonoester.. Its function is as follows. Digests double-stranded RNA. Involved in the processing of primary rRNA transcript to yield the immediate precursors to the large and small rRNAs (23S and 16S). Processes some mRNAs, and tRNAs when they are encoded in the rRNA operon. Processes pre-crRNA and tracrRNA of type II CRISPR loci if present in the organism. This chain is Ribonuclease 3, found in Myxococcus xanthus (strain DK1622).